Consider the following 334-residue polypeptide: Glutaredoxin-3 (334 aa).

Ala2 carries the post-translational modification N-acetylalanine. The Thioredoxin domain occupies 2-116 (AGGAAEAAAA…LTKKVQRHAS (115 aa)). The disordered stretch occupies residues 110-131 (KVQRHASSGSFSPSGSEHPKED). Ser116 and Ser119 each carry phosphoserine. Over residues 116-125 (SSGSFSPSGS) the composition is skewed to low complexity. Glutaredoxin domains lie at 145–235 (CMLF…PKLE) and 236–334 (ERLK…KGEN). 2 residues coordinate [2Fe-2S] cluster: Cys158 and Cys260.

As to quaternary structure, homodimer; the homodimer is independent of 2Fe-2S clusters. Heterotrimer; forms a heterotrimeric complex composed by two BOLA2 molecules and one GLRX3 molecule; linked by [2Fe-2S] clusters. Interacts (via N-terminus) with PRKCQ/PKC-theta. Interacts (via C-terminus) with CSRP3. Interacts with CSRP2.

The protein localises to the cytoplasm. The protein resides in the cytosol. It is found in the cell cortex. It localises to the myofibril. Its subcellular location is the sarcomere. The protein localises to the z line. Together with BOLA2, acts as a cytosolic iron-sulfur (Fe-S) cluster assembly factor that facilitates [2Fe-2S] cluster insertion into a subset of cytosolic proteins. Acts as a critical negative regulator of cardiac hypertrophy and a positive inotropic regulator. Required for hemoglobin maturation. Does not possess any thyoredoxin activity since it lacks the conserved motif that is essential for catalytic activity. The chain is Glutaredoxin-3 (GLRX3) from Bos taurus (Bovine).